The following is a 320-amino-acid chain: Thiamine thiazole synthase (320 aa).

Substrate is bound by residues C82, E103–A104, G111, and V176. C209 bears the 2,3-didehydroalanine (Cys) mark. Substrate-binding positions include D211, H226, M278, and R288–G290.

Belongs to the THI4 family. In terms of assembly, homooctamer. Fe cation is required as a cofactor. During the catalytic reaction, a sulfide is transferred from Cys-209 to a reaction intermediate, generating a dehydroalanine residue.

Its subcellular location is the cytoplasm. The protein localises to the nucleus. The catalysed reaction is [ADP-thiazole synthase]-L-cysteine + glycine + NAD(+) = [ADP-thiazole synthase]-dehydroalanine + ADP-5-ethyl-4-methylthiazole-2-carboxylate + nicotinamide + 3 H2O + 2 H(+). Functionally, involved in biosynthesis of the thiamine precursor thiazole. Catalyzes the conversion of NAD and glycine to adenosine diphosphate 5-(2-hydroxyethyl)-4-methylthiazole-2-carboxylic acid (ADT), an adenylated thiazole intermediate. The reaction includes an iron-dependent sulfide transfer from a conserved cysteine residue of the protein to a thiazole intermediate. The enzyme can only undergo a single turnover, which suggests it is a suicide enzyme. May have additional roles in adaptation to various stress conditions and in DNA damage tolerance. The protein is Thiamine thiazole synthase (sti35) of Fusarium oxysporum f. sp. lycopersici (strain 4287 / CBS 123668 / FGSC 9935 / NRRL 34936) (Fusarium vascular wilt of tomato).